The primary structure comprises 629 residues: tRNA uridine 5-carboxymethylaminomethyl modification enzyme MnmG (629 aa).

Residues 13–18 (GGGHAG), Val-125, and Ser-180 each bind FAD. 273 to 287 (GPRYCPSIEDKVMRF) contacts NAD(+). Gln-370 is an FAD binding site.

This sequence belongs to the MnmG family. In terms of assembly, homodimer. Heterotetramer of two MnmE and two MnmG subunits. FAD serves as cofactor.

The protein localises to the cytoplasm. In terms of biological role, NAD-binding protein involved in the addition of a carboxymethylaminomethyl (cmnm) group at the wobble position (U34) of certain tRNAs, forming tRNA-cmnm(5)s(2)U34. This Pasteurella multocida (strain Pm70) protein is tRNA uridine 5-carboxymethylaminomethyl modification enzyme MnmG.